Here is a 230-residue protein sequence, read N- to C-terminus: Somatolactin (230 aa).

Positions 1–23 (MNMMTVKQGVWAALLWPYLLAAS) are cleaved as a signal peptide. 3 disulfides stabilise this stretch: Cys28-Cys38, Cys88-Cys204, and Cys221-Cys229. N-linked (GlcNAc...) asparagine glycans are attached at residues Asn137 and Asn144.

The protein belongs to the somatotropin/prolactin family.

Its subcellular location is the secreted. In Hippoglossus hippoglossus (Atlantic halibut), this protein is Somatolactin.